A 357-amino-acid polypeptide reads, in one-letter code: Heat-inducible transcription repressor HrcA (357 aa).

The protein belongs to the HrcA family.

Negative regulator of class I heat shock genes (grpE-dnaK-dnaJ and groELS operons). Prevents heat-shock induction of these operons. The chain is Heat-inducible transcription repressor HrcA from Ureaplasma parvum serovar 3 (strain ATCC 27815 / 27 / NCTC 11736).